Here is a 39-residue protein sequence, read N- to C-terminus: Photosystem II reaction center protein J (39 aa).

The helical transmembrane segment at Leu9–Tyr29 threads the bilayer.

This sequence belongs to the PsbJ family. PSII is composed of 1 copy each of membrane proteins PsbA, PsbB, PsbC, PsbD, PsbE, PsbF, PsbH, PsbI, PsbJ, PsbK, PsbL, PsbM, PsbT, PsbX, PsbY, PsbZ, Psb30/Ycf12, at least 3 peripheral proteins of the oxygen-evolving complex and a large number of cofactors. It forms dimeric complexes.

Its subcellular location is the plastid. It is found in the chloroplast thylakoid membrane. Functionally, one of the components of the core complex of photosystem II (PSII). PSII is a light-driven water:plastoquinone oxidoreductase that uses light energy to abstract electrons from H(2)O, generating O(2) and a proton gradient subsequently used for ATP formation. It consists of a core antenna complex that captures photons, and an electron transfer chain that converts photonic excitation into a charge separation. This chain is Photosystem II reaction center protein J, found in Pyropia yezoensis (Susabi-nori).